A 437-amino-acid chain; its full sequence is Minor fimbrial subunit HifE (437 aa).

The first 30 residues, 1–30 (MNKKSYINHYLTLFKVTTLLFTLSSNPVWA), serve as a signal peptide directing secretion.

The protein belongs to the fimbrial protein family.

Its subcellular location is the fimbrium. Functionally, may be a minor structural protein required for pilus biogenesis. May be the adhesive component in the pili. This chain is Minor fimbrial subunit HifE (hifE), found in Haemophilus influenzae.